Here is a 271-residue protein sequence, read N- to C-terminus: Putative pyruvate, phosphate dikinase regulatory protein (271 aa).

ADP is bound at residue 147–154 (GLSRTSKT).

Belongs to the pyruvate, phosphate/water dikinase regulatory protein family. PDRP subfamily.

It carries out the reaction N(tele)-phospho-L-histidyl/L-threonyl-[pyruvate, phosphate dikinase] + ADP = N(tele)-phospho-L-histidyl/O-phospho-L-threonyl-[pyruvate, phosphate dikinase] + AMP + H(+). It catalyses the reaction N(tele)-phospho-L-histidyl/O-phospho-L-threonyl-[pyruvate, phosphate dikinase] + phosphate + H(+) = N(tele)-phospho-L-histidyl/L-threonyl-[pyruvate, phosphate dikinase] + diphosphate. Bifunctional serine/threonine kinase and phosphorylase involved in the regulation of the pyruvate, phosphate dikinase (PPDK) by catalyzing its phosphorylation/dephosphorylation. This Clostridium tetani (strain Massachusetts / E88) protein is Putative pyruvate, phosphate dikinase regulatory protein.